Consider the following 296-residue polypeptide: Polyamine aminopropyltransferase (296 aa).

Residues 5–238 form the PABS domain; the sequence is ELWYETLHAN…GIMTFAWATQ (234 aa). Gln33 provides a ligand contact to S-methyl-5'-thioadenosine. Spermidine contacts are provided by His64 and Asp88. S-methyl-5'-thioadenosine-binding positions include Glu108 and 140-141; that span reads DG. Residue Asp158 is the Proton acceptor of the active site. 158–161 serves as a coordination point for spermidine; sequence DCTD. An S-methyl-5'-thioadenosine-binding site is contributed by Pro165.

It belongs to the spermidine/spermine synthase family. In terms of assembly, homodimer or homotetramer.

It localises to the cytoplasm. The catalysed reaction is S-adenosyl 3-(methylsulfanyl)propylamine + putrescine = S-methyl-5'-thioadenosine + spermidine + H(+). The protein operates within amine and polyamine biosynthesis; spermidine biosynthesis; spermidine from putrescine: step 1/1. Its function is as follows. Catalyzes the irreversible transfer of a propylamine group from the amino donor S-adenosylmethioninamine (decarboxy-AdoMet) to putrescine (1,4-diaminobutane) to yield spermidine. This Yersinia pestis bv. Antiqua (strain Antiqua) protein is Polyamine aminopropyltransferase.